The primary structure comprises 390 residues: Chorismate synthase (390 aa).

NADP(+)-binding residues include Arg-48 and Arg-54. Residues Arg-132–Ser-134, Asn-244–Ala-245, Gly-289, Lys-304–Ser-308, and Arg-330 contribute to the FMN site. Residues Val-362–Gly-390 are disordered. Positions Gly-363–Thr-379 are enriched in low complexity. The span at His-380 to Gly-390 shows a compositional bias: gly residues.

It belongs to the chorismate synthase family. In terms of assembly, homotetramer. Requires FMNH2 as cofactor.

It catalyses the reaction 5-O-(1-carboxyvinyl)-3-phosphoshikimate = chorismate + phosphate. It participates in metabolic intermediate biosynthesis; chorismate biosynthesis; chorismate from D-erythrose 4-phosphate and phosphoenolpyruvate: step 7/7. Catalyzes the anti-1,4-elimination of the C-3 phosphate and the C-6 proR hydrogen from 5-enolpyruvylshikimate-3-phosphate (EPSP) to yield chorismate, which is the branch point compound that serves as the starting substrate for the three terminal pathways of aromatic amino acid biosynthesis. This reaction introduces a second double bond into the aromatic ring system. The chain is Chorismate synthase from Methylobacterium sp. (strain 4-46).